The sequence spans 740 residues: Probable apyrase 7 (740 aa).

Topologically, residues methionine 1–alanine 113 are cytoplasmic. The chain crosses the membrane as a helical span at residues valine 114–isoleucine 134. The Extracellular segment spans residues tyrosine 135–lysine 581. N-linked (GlcNAc...) asparagine glycosylation is present at asparagine 137. An ATP-binding site is contributed by valine 147–arginine 157. N-linked (GlcNAc...) asparagine glycosylation occurs at asparagine 208. The active-site Proton acceptor is glutamate 284. Glycine 309 to glutamine 319 serves as a coordination point for ATP. N-linked (GlcNAc...) asparagine glycans are attached at residues asparagine 330, asparagine 374, asparagine 439, and asparagine 484. Residues isoleucine 582 to leucine 602 form a helical membrane-spanning segment. Topologically, residues serine 603–methionine 740 are cytoplasmic. Residues phenylalanine 706–methionine 740 form a disordered region. Low complexity predominate over residues serine 708–arginine 721.

This sequence belongs to the GDA1/CD39 NTPase family. Ca(2+) is required as a cofactor. Detected in mature pollen grains. Also expressed in more diverse tissues such as roots, leaves, stems, pistils and sepals. More particularly expressed in the vascular bundle.

It localises to the membrane. It carries out the reaction a ribonucleoside 5'-triphosphate + 2 H2O = a ribonucleoside 5'-phosphate + 2 phosphate + 2 H(+). Functionally, catalyzes the hydrolysis of phosphoanhydride bonds of nucleoside tri- and di-phosphates. Involved in the regulation of pollen and anther development. This Arabidopsis thaliana (Mouse-ear cress) protein is Probable apyrase 7 (APY7).